A 165-amino-acid chain; its full sequence is MAKVEQNEGLVEKLVAVDRVAKVVKGGRIFSFTALTVVGDGNGRVGFGRGKAREVPAAISKALEAARRNMITVDLAGTTLQHPVNARHGASRVYMQPASEGTGVIAGGAMRAVLEAAGVHNVLAKCYGSTNAANVVNATFKGLRDMTSPEKVAAKRGKSVEEIQG.

Positions L10–V73 constitute an S5 DRBM domain.

The protein belongs to the universal ribosomal protein uS5 family. As to quaternary structure, part of the 30S ribosomal subunit. Contacts proteins S4 and S8.

In terms of biological role, with S4 and S12 plays an important role in translational accuracy. Located at the back of the 30S subunit body where it stabilizes the conformation of the head with respect to the body. The sequence is that of Small ribosomal subunit protein uS5 from Acinetobacter baumannii (strain AB307-0294).